The sequence spans 350 residues: Probable dTDP-glucose 4,6-dehydratase (350 aa).

7–13 (GGAGFIG) lines the NAD(+) pocket. Position 132 (threonine 132) interacts with substrate. Aspartate 133 (proton donor) is an active-site residue. Residues glutamate 134 and tyrosine 157 each act as proton acceptor in the active site.

The protein belongs to the NAD(P)-dependent epimerase/dehydratase family. dTDP-glucose dehydratase subfamily. The cofactor is NAD(+).

The enzyme catalyses dTDP-alpha-D-glucose = dTDP-4-dehydro-6-deoxy-alpha-D-glucose + H2O. It participates in carbohydrate biosynthesis; dTDP-L-rhamnose biosynthesis. This Sinorhizobium fredii (strain NBRC 101917 / NGR234) protein is Probable dTDP-glucose 4,6-dehydratase.